We begin with the raw amino-acid sequence, 871 residues long: MFSSDELRENYLKFFEEKGHKRIVSSSLIPHNDPTLLLTTAGMVQFKPYYMGVAKPENPRMASCQKCFRTTDIESVGDASHLTMFEMLGNFSIGNYFKKEAIAWAWEYVTQRLNIPAERLWITVYLDDDEAIALWKEQGVPENRIVRLGAADNFWGPAGDSGPCGPCSEIHYDFGQETGCGKADCNPSCKCGRFCEIWNLVFVQFNQDKSGKRQNLPAPSIDTGMGLERLTILMQSKKNVYETDIFAPIVEKACLLSGRKYGCDAATDRALRIVSEHSRGITFLIADGVIPDKAGRGYVLRRLLRRAVLFGRRLGLERPFLVDMAGAVINRMSGIYPELKKRQTYVLEMIASEEARFSETLATGLELLEEIVRQTKGGRISGQDAFKLYDTYGFPVEMTTEIAAEKGLSVDLDGFESEMEIQRTKARSSRKFSFDAAATAEAVKNMRHAEKTCFVGYELAIQKSTIKDILTEGGTVDSIEEGDEASIVLDESPFYAEMGGQVGDTGEIITGGGRFEVKNTLHLPNGVFLHQGRVINGCLKISEAATAHINEERRRDIARNHTATHILQTALREVLGEQVQQRGSVVTPDRLRFDFSHLKPMSKDEMRRVEEFVNDKIRRNLPVYAEEMPYRHALEEGVTALFGEKYGDRVRVLRVGRPAVSAELCGGTHVTASGEIALFKIMSESSVGAGLRRIEAVTGREAEAFINLQQDSLSELSGMLESTAEESPRKLAELKEEIDTLKKAVQNLERQMSRGEAEELLSKAEDYKGVKLLVSRMTSVNADTLRETADFLRDKLGSGVIVLGTVTEDKPFFLCMVTPDLIAKGYHAGNIVKKLSQIAGGGGGGKPNMAQGGGRDKSKLDEALQAVKGMI.

4 residues coordinate Zn(2+): His-561, His-565, Cys-665, and His-669.

Belongs to the class-II aminoacyl-tRNA synthetase family. The cofactor is Zn(2+).

It is found in the cytoplasm. The enzyme catalyses tRNA(Ala) + L-alanine + ATP = L-alanyl-tRNA(Ala) + AMP + diphosphate. Catalyzes the attachment of alanine to tRNA(Ala) in a two-step reaction: alanine is first activated by ATP to form Ala-AMP and then transferred to the acceptor end of tRNA(Ala). Also edits incorrectly charged Ser-tRNA(Ala) and Gly-tRNA(Ala) via its editing domain. In Dehalococcoides mccartyi (strain CBDB1), this protein is Alanine--tRNA ligase.